Here is a 135-residue protein sequence, read N- to C-terminus: Large-conductance mechanosensitive channel (135 aa).

A run of 2 helical transmembrane segments spans residues 10–30 and 76–96; these read FAMR…AAFG and GVFI…FLAI.

This sequence belongs to the MscL family. Homopentamer.

The protein resides in the cell inner membrane. In terms of biological role, channel that opens in response to stretch forces in the membrane lipid bilayer. May participate in the regulation of osmotic pressure changes within the cell. This Cronobacter sakazakii (strain ATCC BAA-894) (Enterobacter sakazakii) protein is Large-conductance mechanosensitive channel.